We begin with the raw amino-acid sequence, 116 residues long: M-zodatoxin-Lt6a/c (116 aa).

Positions 1–22 (MKYFVVALTLAVAFVCIEECKT) are cleaved as a signal peptide. 2 consecutive propeptides follow at residues 23–44 (VEIG…DEAR) and 80–83 (EEAR). 2 consecutive short sequence motifs (processing quadruplet motif) follow at residues 41–44 (DEAR) and 80–83 (EEAR). A Pyrrolidone carboxylic acid modification is found at glutamine 84.

Belongs to the cationic peptide 03 (latarcin) family. 06 subfamily. Cleavage of the propeptide depends on the processing quadruplet motif (XXXR, with at least one of X being E). In terms of tissue distribution, expressed by the venom gland.

The protein localises to the secreted. Functionally, does not have antimicrobial activity against Gram-positive bacteria (A.globiformis VKM Ac-1112 (MIC&gt;70 uM) and B.subtilis VKM B-501 (MIC&gt;70 uM)), Gram-negative bacteria (E.coli DH5-alpha (MIC&gt;70 uM), E.coli MH1 (MIC&gt;70 uM) and P.aeruginosa PAO1 (MIC&gt;70 uM)), yeast (P.pastoris GS115 (MIC&gt;70 uM) or S.cerevisiae Y190 (MIC&gt;70 uM)). Does not have hemolytic activity against rabbit erythrocytes. However, it causes some conductance changes in planar bilayer membranes, without membrane rupture, suggesting a cytolytic function on other biological targets. It causes paralysis, but is not lethal when injected into insect larvae. In Lachesana tarabaevi (Spider), this protein is M-zodatoxin-Lt6a/c.